Here is a 255-residue protein sequence, read N- to C-terminus: Taurine import ATP-binding protein TauB (255 aa).

Positions 2–229 (LNVSGLWAEY…RYAEGEPCRA (228 aa)) constitute an ABC transporter domain. 34–41 (GPSGCGKT) is an ATP binding site.

Belongs to the ABC transporter superfamily. Taurine importer (TC 3.A.1.17.1) family. As to quaternary structure, the complex is composed of two ATP-binding proteins (TauB), two transmembrane proteins (TauC) and a solute-binding protein (TauA).

It is found in the cell inner membrane. The catalysed reaction is taurine(out) + ATP + H2O = taurine(in) + ADP + phosphate + H(+). In terms of biological role, part of the ABC transporter complex TauABC involved in taurine import. Responsible for energy coupling to the transport system. This Yersinia pseudotuberculosis serotype I (strain IP32953) protein is Taurine import ATP-binding protein TauB.